The chain runs to 2179 residues: Probable inactive serine/threonine-protein kinase lvsG (2179 aa).

A disordered region spans residues 100–167 (DHDLNKNKNN…TSISLNDLNS (68 aa)). 2 stretches are compositionally biased toward low complexity: residues 106-121 (NKNN…NNSG) and 141-159 (LSPS…LSTS). A WD 1 repeat occupies 216–256 (LYERSLKTSQQQQQQQQQQFKFQPNETLSLWEYFDEINSPP). Disordered stretches follow at residues 281 to 300 (LDNK…NSQS), 523 to 556 (DNDN…TVGW), 589 to 621 (DSMG…NSGK), 778 to 801 (KSLK…QPQF), 844 to 959 (NNHH…NKPS), 1033 to 1055 (AQQQ…SKQL), 1079 to 1153 (GISK…STTD), 1339 to 1362 (NHSN…KNGS), and 1785 to 1807 (TTTT…PNSL). In terms of domain architecture, BEACH spans 463–801 (YHQPLENQFE…QQQTQQQPQF (339 aa)). Positions 534–548 (NSSSSNNNNNNNNED) are enriched in low complexity. Gly residues predominate over residues 590–602 (SMGGGIGSIGSTG). 4 stretches are compositionally biased toward low complexity: residues 783-800 (QRQQ…QQPQ), 853-943 (NSNI…GVNN), 1033-1047 (AQQQ…QQQA), and 1084-1098 (TTNA…TNSN). A coiled-coil region spans residues 1021–1049 (LQQQLQQQQQQQAQQQQSQQQSQQQQANS). The 337-residue stretch at 1064–1400 (ESMIKKYSNG…VNELLSSSLF (337 aa)) folds into the Protein kinase domain. Residues 1099 to 1122 (MGDSIGNNITSPPSPTSLKDSSSI) show a composition bias toward polar residues. Positions 1123–1134 (QQQQQQQQQQQQ) are enriched in low complexity. Over residues 1135–1153 (NSESTRPITPPNVSNSTTD) the composition is skewed to polar residues. 2 stretches are compositionally biased toward low complexity: residues 1339 to 1360 (NHSN…NNKN) and 1785 to 1801 (TTTT…NNNN). 6 WD repeats span residues 1864 to 1903 (EHNA…SLTT), 1906 to 1942 (QHMH…KVNV), 1945 to 1983 (EPTG…LTHE), 2007 to 2048 (SNSN…ILEQ), 2052 to 2089 (HHDS…PIIS), and 2149 to 2179 (PKQS…KICQ).

This sequence belongs to the protein kinase superfamily. Ser/Thr protein kinase family.

The sequence is that of Probable inactive serine/threonine-protein kinase lvsG (lvsG) from Dictyostelium discoideum (Social amoeba).